A 383-amino-acid polypeptide reads, in one-letter code: MKMNLPPFIELYRALIATPSISATDSALDQSNHTLINLLAGWFGDLGFHVEVQPVPGTLNKFNMLARIGEGKGGLLLAGHTDTVPFDDGRWTRDPFTLTEHDNKLYGLGTADMKGFFAFILDALRDIDPTKLTKPLYVLATADEETTMAGAKYFSESTQIRPDCAIIGEPTSLQPVRAHKGHMSNAIRIQGQSGHSSDPSRGVNAIELMHEAISHLLVLRNTLQERYHNPIFHIPYPTMNLGHIHGGDAANRICGCCELHMDIRPLPGITLNDLDGLLSEALEPVSQRWPGRLTISELHPPIPGYECPPDHRLVSVVEKLLGTKTEIVNYCTEAPFIQTLCPTLVLGPGSIEQAHQPDEYIDTKFIKPTRELISQVIHHFCHH.

A Zn(2+)-binding site is contributed by H80. D82 is a catalytic residue. D112 lines the Zn(2+) pocket. E144 is a catalytic residue. Positions 145, 169, and 355 each coordinate Zn(2+).

The protein belongs to the peptidase M20A family. ArgE subfamily. Homodimer. Zn(2+) is required as a cofactor. Requires Co(2+) as cofactor. Glutathione serves as cofactor.

It is found in the cytoplasm. It carries out the reaction N(2)-acetyl-L-ornithine + H2O = L-ornithine + acetate. It functions in the pathway amino-acid biosynthesis; L-arginine biosynthesis; L-ornithine from N(2)-acetyl-L-ornithine (linear): step 1/1. Its function is as follows. Catalyzes the hydrolysis of the amide bond of N(2)-acetylated L-amino acids. Cleaves the acetyl group from N-acetyl-L-ornithine to form L-ornithine, an intermediate in L-arginine biosynthesis pathway, and a branchpoint in the synthesis of polyamines. The sequence is that of Acetylornithine deacetylase from Pectobacterium carotovorum subsp. carotovorum (strain PC1).